A 231-amino-acid chain; its full sequence is Sugar fermentation stimulation protein homolog (231 aa).

It belongs to the SfsA family.

In Citrifermentans bemidjiense (strain ATCC BAA-1014 / DSM 16622 / JCM 12645 / Bem) (Geobacter bemidjiensis), this protein is Sugar fermentation stimulation protein homolog.